We begin with the raw amino-acid sequence, 415 residues long: Carbamoyl phosphate synthase arginine-specific small chain (415 aa).

The transit peptide at 1–17 directs the protein to the mitochondrion; it reads MLRFLKPFPLRFGKRFY. L-glutamine contacts are provided by Ser-88, Gly-272, and Gly-274. In terms of domain architecture, Glutamine amidotransferase type-1 spans 225–412; sequence NIAVIDCGVK…IKEAIKYQKS (188 aa). The active-site Nucleophile is the Cys-301. Residues Met-302, Gln-305, Asn-343, Gly-345, and Tyr-346 each contribute to the L-glutamine site. Active-site residues include His-385 and Glu-387.

The protein belongs to the CarA family. In terms of assembly, heterodimer composed of 2 chains; the small (or glutamine) chain promotes the hydrolysis of glutamine to ammonia, which is used by the large (or ammonia) chain to synthesize carbamoyl phosphate.

The protein localises to the mitochondrion. It is found in the cytoplasm. The catalysed reaction is hydrogencarbonate + L-glutamine + 2 ATP + H2O = carbamoyl phosphate + L-glutamate + 2 ADP + phosphate + 2 H(+). It catalyses the reaction L-glutamine + H2O = L-glutamate + NH4(+). Its pathway is amino-acid biosynthesis; L-arginine biosynthesis; carbamoyl phosphate from bicarbonate: step 1/1. Functionally, small subunit of the arginine-specific carbamoyl phosphate synthase (CPSase). CPSase catalyzes the formation of carbamoyl phosphate from the ammonia moiety of glutamine, carbonate, and phosphate donated by ATP, the first step of the arginine biosynthetic pathway. The small subunit (glutamine amidotransferase) binds and cleaves glutamine to supply the large subunit with the substrate ammonia. This is Carbamoyl phosphate synthase arginine-specific small chain (arg5) from Schizosaccharomyces pombe (strain 972 / ATCC 24843) (Fission yeast).